The chain runs to 968 residues: RNA polymerase-associated protein RapA (968 aa).

In terms of domain architecture, Helicase ATP-binding spans D164 to N334. An ATP-binding site is contributed by D177 to T184. The DEAH box signature appears at D280–H283. The Helicase C-terminal domain maps to R490–R685.

This sequence belongs to the SNF2/RAD54 helicase family. RapA subfamily. In terms of assembly, interacts with the RNAP. Has a higher affinity for the core RNAP than for the holoenzyme. Its ATPase activity is stimulated by binding to RNAP.

Functionally, transcription regulator that activates transcription by stimulating RNA polymerase (RNAP) recycling in case of stress conditions such as supercoiled DNA or high salt concentrations. Probably acts by releasing the RNAP, when it is trapped or immobilized on tightly supercoiled DNA. Does not activate transcription on linear DNA. Probably not involved in DNA repair. This chain is RNA polymerase-associated protein RapA, found in Salmonella newport (strain SL254).